The following is a 518-amino-acid chain: Nuclear receptor ROR-gamma (518 aa).

Residues 1 to 30 (MDRAPQRQHQASRELLAAKKTHTSQIEVIP) form a modulating region. 2 consecutive NR C4-type zinc fingers follow at residues 31 to 51 (CKIC…CEGC) and 67 to 91 (CTRQ…LQKC). Residues 31 to 96 (CKICGDKSSG…RLQKCLALGM (66 aa)) constitute a DNA-binding region (nuclear receptor). 2 disordered regions span residues 105–183 (RMSK…SGSG) and 238–258 (HPGL…SFRS). The span at 109 to 118 (KQRDSLHAEV) shows a compositional bias: basic and acidic residues. Positions 119 to 130 (QKQLQQRQQQQQ) are enriched in low complexity. An NR LBD domain is found at 269-508 (EIEHLVQSVC…PPLYKELFST (240 aa)). Positions 501-506 (LYKELF) match the AF-2 motif.

Belongs to the nuclear hormone receptor family. NR1 subfamily. As to quaternary structure, interacts (via AF-2 motif) with the coactivators NCOA1, NCOA2 and PPARGC1A (via LXXLL motif). Interacts with the corepressor NCOR1. Interacts with CRY1. Interacts (via AF-2 motif) with PROX1. Interacts with FOXP3. Interacts with NR0B2.

It localises to the nucleus. Functionally, nuclear receptor that binds DNA as a monomer to ROR response elements (RORE) containing a single core motif half-site 5'-AGGTCA-3' preceded by a short A-T-rich sequence. Key regulator of cellular differentiation, immunity, peripheral circadian rhythm as well as lipid, steroid, xenobiotics and glucose metabolism. Considered to have intrinsic transcriptional activity, have some natural ligands like oxysterols that act as agonists (25-hydroxycholesterol) or inverse agonists (7-oxygenated sterols), enhancing or repressing the transcriptional activity, respectively. Recruits distinct combinations of cofactors to target gene regulatory regions to modulate their transcriptional expression, depending on the tissue, time and promoter contexts. Regulates the circadian expression of clock genes such as CRY1, BMAL1 and NR1D1 in peripheral tissues and in a tissue-selective manner. Competes with NR1D1 for binding to their shared DNA response element on some clock genes such as BMAL1, CRY1 and NR1D1 itself, resulting in NR1D1-mediated repression or RORC-mediated activation of the expression, leading to the circadian pattern of clock genes expression. Therefore influences the period length and stability of the clock. Involved in the regulation of the rhythmic expression of genes involved in glucose and lipid metabolism, including PLIN2 and AVPR1A. Negative regulator of adipocyte differentiation through the regulation of early phase genes expression, such as MMP3. Controls adipogenesis as well as adipocyte size and modulates insulin sensitivity in obesity. In liver, has specific and redundant functions with RORA as positive or negative modulator of expression of genes encoding phase I and Phase II proteins involved in the metabolism of lipids, steroids and xenobiotics, such as SULT1E1. Also plays a role in the regulation of hepatocyte glucose metabolism through the regulation of G6PC1 and PCK1. Essential for thymopoiesis and the development of several secondary lymphoid tissues, including lymph nodes and Peyer's patches. Required for the generation of LTi (lymphoid tissue inducer) cells. Regulates thymocyte survival through DNA-binding on ROREs of target gene promoter regions and recruitment of coactivaros via the AF-2. Also plays a key role, downstream of IL6 and TGFB and synergistically with RORA, for lineage specification of uncommitted CD4(+) T-helper (T(H)) cells into T(H)17 cells, antagonizing the T(H)1 program. Probably regulates IL17 and IL17F expression on T(H) by binding to the essential enhancer conserved non-coding sequence 2 (CNS2) in the IL17-IL17F locus. May also play a role in the pre-TCR activation cascade leading to the maturation of alpha/beta T-cells and may participate in the regulation of DNA accessibility in the TCR-J(alpha) locus. Regulates the rhythmic expression of PROX1 and promotes its nuclear localization. Plays an indispensable role in the induction of IFN-gamma dependent anti-mycobacterial systemic immunity. This chain is Nuclear receptor ROR-gamma (RORC), found in Pongo abelii (Sumatran orangutan).